Consider the following 305-residue polypeptide: Mitochondrial uncoupling protein 2 (305 aa).

3 Solcar repeats span residues 10-104, 114-205, and 214-297; these read ISFL…VKTL, IPLY…IKET, and DSVL…VKKV. The next 6 helical transmembrane spans lie at 16-36, 73-93, 120-140, 179-199, 220-240, and 270-290; these read FICS…LDTA, ISGL…YGGL, ILAA…TDLV, TGLG…LASY, LLAG…IDVV, and YKGF…MFLT.

This sequence belongs to the mitochondrial carrier (TC 2.A.29) family.

The protein localises to the mitochondrion inner membrane. PUMPS are mitochondrial transporter proteins that create proton leaks across the inner mitochondrial membrane, thus uncoupling oxidative phosphorylation. This leads to a decrease in the efficiency of oxidative phosphorylation and an increase in heat production. May be involved in protecting plant cells against oxidative stress damage. The sequence is that of Mitochondrial uncoupling protein 2 (PUMP2) from Arabidopsis thaliana (Mouse-ear cress).